We begin with the raw amino-acid sequence, 72 residues long: Translation initiation factor IF-1 (72 aa).

Residues 1 to 72 (MAKDDVIEID…DKGRITFRYK (72 aa)) form the S1-like domain.

It belongs to the IF-1 family. Component of the 30S ribosomal translation pre-initiation complex which assembles on the 30S ribosome in the order IF-2 and IF-3, IF-1 and N-formylmethionyl-tRNA(fMet); mRNA recruitment can occur at any time during PIC assembly.

Its subcellular location is the cytoplasm. In terms of biological role, one of the essential components for the initiation of protein synthesis. Stabilizes the binding of IF-2 and IF-3 on the 30S subunit to which N-formylmethionyl-tRNA(fMet) subsequently binds. Helps modulate mRNA selection, yielding the 30S pre-initiation complex (PIC). Upon addition of the 50S ribosomal subunit IF-1, IF-2 and IF-3 are released leaving the mature 70S translation initiation complex. This is Translation initiation factor IF-1 from Sulfurovum sp. (strain NBC37-1).